A 69-amino-acid polypeptide reads, in one-letter code: Rubredoxin-1 (69 aa).

The Rubredoxin-like domain maps to 14–69 (QASWMCAECGYIYDPAEGNLETNIRPGMPFDKLPDDWSCPVCNHPKNQFTKFISQL). Positions 19, 22, 52, and 55 each coordinate Fe cation.

Belongs to the rubredoxin family. As to quaternary structure, monomer. Requires Fe(3+) as cofactor.

Its function is as follows. Serves as an electron acceptor for pyruvate ferredoxin oxidoreductase (PFOR). The polypeptide is Rubredoxin-1 (rub1) (Chlorobaculum tepidum (strain ATCC 49652 / DSM 12025 / NBRC 103806 / TLS) (Chlorobium tepidum)).